A 483-amino-acid chain; its full sequence is Acetyltransferase AOL_s00215g273 (483 aa).

8 helical membrane passes run 9-29 (ALIGVTVIPTLILSLPTTSFV), 33-53 (IYPLPALLVLRALLWPPTEGL), 141-161 (VAYIFESMVSILSIYLGLYTC), 191-211 (IFQMVVAFMGIFAMVSNSVLV), 292-312 (FLVFSAFGVSGLLHSLAVYYG), 334-354 (VTGYFFYIQPFAITLEDFICW), 372-392 (WFVGMVYTLTWFTWGTAVLWI), and 453-473 (LGGYLYLYAYTTLEILGGSGF).

Belongs to the wax synthase family.

The protein resides in the membrane. It functions in the pathway secondary metabolite biosynthesis; terpenoid biosynthesis. Its function is as follows. Acetyltransferase; part of the gene cluster that mediates the biosynthesis of sesquiterpenyl epoxy-cyclohexenoids (SECs) such as anthrobotrisins and arthrosporols, metabolites that possess a novel hybrid carbon skeleton consisting of a polyketide-derived epoxycyclohexenol combined with a terpenoid-derived monocyclic sesquiterpenol substructure (PKS-PTS hybrid). The SEC pathway plays an important role for fungal soil colonization via decreasing fungal nematode-capturing ability. The role of the acetyltransferase in SEC biosynthesis has still to be determined. The pathway begins with the biosynthesis of 6-methylsalicylic acid (6-MSA), the first precursor of the polyketide-derived epoxycyclohexenol in arthrosporols, by the polyketide synthase (PKS) AOL_s00215g283 via condensation of 1 acetate and 3 malonate units. The 6-methylsalicylic acid decarboxylase AOL_s00215g281 then catalyzes the decarboxylation of 6-methylsalicylic acid to yield m-cresol. The cytochrome P450 monooxygenase AOL_s00215g282 further oxidizes m-cresol to yield toluquinol. With the assistance of the oxidoreductase AOL_s00215g277, the polyprenyl transferase AOL_s00215g276 catalyzes the farnesylation of toluquinol to produce farnesyl hydroquinone, the hybrid precursor for biosynthesis of SECs. Farnesyl hydroquinone undergoes epoxidation and then subsequent dehydrogenation to form farnesyl epoxy-quinone, the first and simplest SEC. The cytochrome P450 monooxygenase AOL_s00215g278 and the FAD-dependent monooxygenase AOL_s00215g279 might be involved in the oxygenation of the phenol moiety, most likely in the epoxy formation. The cytochrome P450 monooxygenases AOL_s00215g274 and AOL_s00215g280 are involved in specific regional ketone reductions at respectively C-4 and C-1 of farnesyl epoxy-quinone PubMed:33823587. In Arthrobotrys oligospora (strain ATCC 24927 / CBS 115.81 / DSM 1491) (Nematode-trapping fungus), this protein is Acetyltransferase AOL_s00215g273.